Consider the following 350-residue polypeptide: Very-long-chain 3-oxoacyl-CoA reductase (350 aa).

A helical membrane pass occupies residues 28-48; the sequence is SLVLLAGIGALSVGTFALRLV. The NADP(+) site is built by Val79, Asp134, Asn161, Lys196, Tyr228, Lys232, Val261, and Ser263. Tyr228 acts as the Proton donor in catalysis. Lys232 functions as the Lowers pKa of active site Tyr in the catalytic mechanism.

The protein belongs to the short-chain dehydrogenases/reductases (SDR) family.

The protein resides in the endoplasmic reticulum membrane. The enzyme catalyses a very-long-chain (3R)-3-hydroxyacyl-CoA + NADP(+) = a very-long-chain 3-oxoacyl-CoA + NADPH + H(+). It participates in lipid metabolism; fatty acid biosynthesis. Functionally, component of the microsomal membrane bound fatty acid elongation system, which produces the 26-carbon very long-chain fatty acids (VLCFA) from palmitate. Catalyzes the reduction of the 3-ketoacyl-CoA intermediate that is formed in each cycle of fatty acid elongation. VLCFAs serve as precursors for ceramide and sphingolipids. This Mycosarcoma maydis (Corn smut fungus) protein is Very-long-chain 3-oxoacyl-CoA reductase.